Reading from the N-terminus, the 229-residue chain is Uracil-DNA glycosylase (229 aa).

Asp65 functions as the Proton acceptor in the catalytic mechanism.

Belongs to the uracil-DNA glycosylase (UDG) superfamily. UNG family.

It is found in the cytoplasm. The enzyme catalyses Hydrolyzes single-stranded DNA or mismatched double-stranded DNA and polynucleotides, releasing free uracil.. Its function is as follows. Excises uracil residues from the DNA which can arise as a result of misincorporation of dUMP residues by DNA polymerase or due to deamination of cytosine. This chain is Uracil-DNA glycosylase, found in Brevibacillus brevis (strain 47 / JCM 6285 / NBRC 100599).